Reading from the N-terminus, the 85-residue chain is Protein RnfH (85 aa).

It belongs to the UPF0125 (RnfH) family.

This is Protein RnfH from Cereibacter sphaeroides (strain ATCC 17023 / DSM 158 / JCM 6121 / CCUG 31486 / LMG 2827 / NBRC 12203 / NCIMB 8253 / ATH 2.4.1.) (Rhodobacter sphaeroides).